The following is a 328-amino-acid chain: Delta(3,5)-Delta(2,4)-dienoyl-CoA isomerase, mitochondrial (328 aa).

The transit peptide at 1 to 33 (MAAGIVASRRLRDLLTRRLTGSNYPGLSISLRL) directs the protein to the mitochondrion. Substrate is bound by residues 116-120 (AGIDL) and Gly174. Lys231 bears the N6-succinyllysine mark. At Ser268 the chain carries Phosphoserine. Residues 326-328 (SKL) carry the Microbody targeting signal motif. Residue Lys327 is modified to N6-acetyllysine.

This sequence belongs to the enoyl-CoA hydratase/isomerase family. In terms of assembly, homohexamer.

Its subcellular location is the mitochondrion. It localises to the peroxisome. The catalysed reaction is (3E,5Z)-octadienoyl-CoA = (2E,4E)-octadienoyl-CoA. The enzyme catalyses (3E,5Z,8Z,11Z,14Z)-eicosapentaenoyl-CoA = (2E,4E,8Z,11Z,14Z)-eicosapentaenoyl-CoA. It participates in lipid metabolism; fatty acid beta-oxidation. In terms of biological role, isomerization of 3-trans,5-cis-dienoyl-CoA to 2-trans,4-trans-dienoyl-CoA. The sequence is that of Delta(3,5)-Delta(2,4)-dienoyl-CoA isomerase, mitochondrial from Homo sapiens (Human).